The following is a 401-amino-acid chain: Imidazolonepropionase (401 aa).

The Fe(3+) site is built by histidine 66 and histidine 68. Residues histidine 66 and histidine 68 each contribute to the Zn(2+) site. The 4-imidazolone-5-propanoate site is built by arginine 75, tyrosine 138, and histidine 171. N-formimidoyl-L-glutamate is bound at residue tyrosine 138. Fe(3+) is bound at residue histidine 236. A Zn(2+)-binding site is contributed by histidine 236. Glutamine 239 lines the 4-imidazolone-5-propanoate pocket. Aspartate 311 contacts Fe(3+). A Zn(2+)-binding site is contributed by aspartate 311. N-formimidoyl-L-glutamate is bound by residues asparagine 313 and glycine 315. Threonine 316 serves as a coordination point for 4-imidazolone-5-propanoate.

It belongs to the metallo-dependent hydrolases superfamily. HutI family. The cofactor is Zn(2+). It depends on Fe(3+) as a cofactor.

The protein localises to the cytoplasm. The catalysed reaction is 4-imidazolone-5-propanoate + H2O = N-formimidoyl-L-glutamate. It functions in the pathway amino-acid degradation; L-histidine degradation into L-glutamate; N-formimidoyl-L-glutamate from L-histidine: step 3/3. In terms of biological role, catalyzes the hydrolytic cleavage of the carbon-nitrogen bond in imidazolone-5-propanoate to yield N-formimidoyl-L-glutamate. It is the third step in the universal histidine degradation pathway. The polypeptide is Imidazolonepropionase (Acinetobacter baumannii (strain ATCC 17978 / DSM 105126 / CIP 53.77 / LMG 1025 / NCDC KC755 / 5377)).